An 802-amino-acid polypeptide reads, in one-letter code: Homeobox-leucine zipper protein ANTHOCYANINLESS 2 (802 aa).

The segment at 71 to 143 is disordered; that stretch reads QPERGTNRGE…RKKRYHRHTP (73 aa). Residues 103-113 are compositionally biased toward basic and acidic residues; the sequence is RSREEEHESRS. A compositionally biased stretch (basic residues) spans 133–142; it reads PRKKRYHRHT. Residues 134 to 193 constitute a DNA-binding region (homeobox); the sequence is RKKRYHRHTPQQIQELESMFKECPHPDEKQRLELSKRLCLETRQVKFWFQNRRTQMKTQL. Residues 182-221 adopt a coiled-coil conformation; the sequence is FQNRRTQMKTQLERHENALLRQENDKLRAENMSIREAMRN. The 232-residue stretch at 315–546 folds into the START domain; the sequence is GIDQKSVLLE…LQRQCECLAI (232 aa).

The protein belongs to the HD-ZIP homeobox family. Class IV subfamily. In terms of assembly, interacts with AIL7/PLT7, ANT, BBM and AIL1. In terms of tissue distribution, expressed in roots, stems, leaves and floral buds.

The protein resides in the nucleus. Probable transcription factor involved in the regulation of the tissue-specific accumulation of anthocyanins and in cellular organization of the primary root. This is Homeobox-leucine zipper protein ANTHOCYANINLESS 2 from Arabidopsis thaliana (Mouse-ear cress).